The chain runs to 612 residues: MELAMDNSYAFNQRSTCNGIPSEKKNNFLVSEDHGQKILSVLQNFREQNVFYDFKIIMKDEIIPCHRCVLAACSDFFRAMFEVNMKERDDGSVTITNLSSKAVKAFLDYAYTGKTKITDDNVEMFFQLSSFLQVSFLSKACSDFLIKSINLVNCLQLLSISDSYGSTSLFDHALHFVQHHFSLLFKSSDFLEMNFGVLQKCLESDELNVPEEEMVLKVVLSWTKHNLESRQKYLPHLIEKVRLHQLSEETLQDCLFNEESLLKSTNCFDIIMDAIKCVQGSGGLFPDARPSTTEKYIFIHKTEENGENQYTFCYNIKSDSWKILPQSHLIDLPGSSLSSYGEKIFLTGGCKGKCCRTVRLHIAESYHDATDQTWCYCPVKNDFFLVSTMKTPRTMHTSVMALDRLFVIGGKTRGSRDIKSLLDVESYNPLSKEWISVSPLPRGIYYPEASTCQNVIYVLGSEVEITDAFNPSLDCFFKYNATTDQWSELVAEFGQFFHATLIKAVPVNCTLYICDLSTYKVYSFCPDTCVWKGEGSFECAGFNAGAIGIEDKIYILGGDYAPDEITDEVQVYHSNRSEWEEVSPMPRALTEFYCQVIQFNKYRDPWFSNLCA.

Residues 52–119 enclose the BTB domain; sequence YDFKIIMKDE…AYTGKTKITD (68 aa). Positions 154–254 constitute a BACK domain; the sequence is CLQLLSISDS…QLSEETLQDC (101 aa). Kelch repeat units follow at residues 295–341, 343–403, 404–454, 456–506, and 552–599; these read KYIF…SSYG, KIFL…MALD, RLFV…TCQN, IYVL…KAVP, and KIYI…VIQF.

This chain is Kelch repeat and BTB domain-containing protein 3, found in Homo sapiens (Human).